The following is a 558-amino-acid chain: Formate--tetrahydrofolate ligase (558 aa).

66–73 (TPAGEGKT) provides a ligand contact to ATP.

It belongs to the formate--tetrahydrofolate ligase family.

It catalyses the reaction (6S)-5,6,7,8-tetrahydrofolate + formate + ATP = (6R)-10-formyltetrahydrofolate + ADP + phosphate. Its pathway is one-carbon metabolism; tetrahydrofolate interconversion. The sequence is that of Formate--tetrahydrofolate ligase from Neisseria meningitidis serogroup A / serotype 4A (strain DSM 15465 / Z2491).